Consider the following 626-residue polypeptide: MHYPKVYDVIVIGGGHAGTEAALAAARMGRQTLLLTHNIETLGQMSCNPAIGGIGKSHLVREIDALGGAMALAADKGGIQFRILNSRKGAAVRATRAQADRVRYKAAIRETLENQANLDIFQQAADDLIVEGDTVKGVVTQMGIRFDAKTVVLTTGTFLGGVIHVGLEKSSGGRAGDPPSIALAQRLRELKLPVGRLKTGTPPRIDARSVDFSVMTPQPGDFPSPVMSFMGDVSMHPEQVNCYITHTNEKTHDIIRGGLDRSPMYTGVIEGVGPRYCPSIEDKIHRFSDKDSHQVFLEPEGLDTHELYPNGISTSLPFDVQFELVRSIRGMENAHILRPGYAIEYDYFNPQALKFTLETKAINGLYFAGQINGTTGYEEAGAQGLLAGLNAARRAWEQEEWTPKRDQAYMGVLVDDLITLGTKEPYRMFTSRAEYRLMLREDNADQRLTTIGRELGLVDDVRWAAYCEKMEAVERETSRLQHLWAAPNNPMGKKFVEMTGADLSKECSAIDLLKRPNINFSQIAELTGSEVSQQVGEQIEIAVKYEGYINRQHEDVAQLKRLEETKIPADFDYDVVSGLSREITQKLKTVRPETLAQASRIPGVTPAAVQLVMITIRKNNMTKKTA.

13–18 (GGGHAG) serves as a coordination point for FAD. 273–287 (GPRYCPSIEDKIHRF) serves as a coordination point for NAD(+).

Belongs to the MnmG family. Homodimer. Heterotetramer of two MnmE and two MnmG subunits. FAD serves as cofactor.

Its subcellular location is the cytoplasm. NAD-binding protein involved in the addition of a carboxymethylaminomethyl (cmnm) group at the wobble position (U34) of certain tRNAs, forming tRNA-cmnm(5)s(2)U34. This is tRNA uridine 5-carboxymethylaminomethyl modification enzyme MnmG from Acinetobacter baumannii (strain ATCC 17978 / DSM 105126 / CIP 53.77 / LMG 1025 / NCDC KC755 / 5377).